We begin with the raw amino-acid sequence, 401 residues long: Elongation factor Tu (401 aa).

The tr-type G domain occupies 10 to 211 (KPHLNVGTIG…ALDTFVPNPK (202 aa)). Residues 19–26 (GHVDHGKT) are G1. 19 to 26 (GHVDHGKT) is a GTP binding site. A Mg(2+)-binding site is contributed by Thr26. The tract at residues 62–66 (GITIA) is G2. The tract at residues 83–86 (DCPG) is G3. Residues 83–87 (DCPGH) and 138–141 (NKAD) contribute to the GTP site. Residues 138-141 (NKAD) form a G4 region. The segment at 179-181 (SAV) is G5.

Belongs to the TRAFAC class translation factor GTPase superfamily. Classic translation factor GTPase family. EF-Tu/EF-1A subfamily. Monomer.

The protein localises to the cytoplasm. The catalysed reaction is GTP + H2O = GDP + phosphate + H(+). Functionally, GTP hydrolase that promotes the GTP-dependent binding of aminoacyl-tRNA to the A-site of ribosomes during protein biosynthesis. This chain is Elongation factor Tu, found in Leptospira borgpetersenii serovar Hardjo-bovis (strain JB197).